The primary structure comprises 460 residues: Chromosomal replication initiator protein DnaA (460 aa).

The domain I, interacts with DnaA modulators stretch occupies residues 1-91; the sequence is MSLINPKVSA…LLWQNEDKSI (91 aa). The tract at residues 91 to 122 is domain II; it reads ICSIDIQVTEEKNSSSSIISKNKEESVNNLGS. The tract at residues 123 to 342 is domain III, AAA+ region; that stretch reads PLDPRFTFDN…GALNKVAHTS (220 aa). Residues Gly-169, Gly-171, Lys-172, and Thr-173 each contribute to the ATP site. Positions 343 to 460 are domain IV, binds dsDNA; that stretch reads LIGRSMTVES…EINQLRKMFK (118 aa).

It belongs to the DnaA family. As to quaternary structure, oligomerizes as a right-handed, spiral filament on DNA at oriC.

The protein resides in the cytoplasm. Its function is as follows. Plays an essential role in the initiation and regulation of chromosomal replication. ATP-DnaA binds to the origin of replication (oriC) to initiate formation of the DNA replication initiation complex once per cell cycle. Binds the DnaA box (a 9 base pair repeat at the origin) and separates the double-stranded (ds)DNA. Forms a right-handed helical filament on oriC DNA; dsDNA binds to the exterior of the filament while single-stranded (ss)DNA is stabiized in the filament's interior. The ATP-DnaA-oriC complex binds and stabilizes one strand of the AT-rich DNA unwinding element (DUE), permitting loading of DNA polymerase. After initiation quickly degrades to an ADP-DnaA complex that is not apt for DNA replication. Binds acidic phospholipids. This chain is Chromosomal replication initiator protein DnaA, found in Wolbachia sp. subsp. Brugia malayi (strain TRS).